The primary structure comprises 315 residues: Cysteine proteinase 2 (315 aa).

A signal peptide spans 1 to 13 (MFAFICLLAIASA). Residues 14–93 (IDFNTWASKN…NGQVKYLNIQ (80 aa)) constitute a propeptide, activation peptide. Disulfide bonds link cysteine 115-cysteine 161 and cysteine 152-cysteine 193. The active site involves cysteine 118. Active-site residues include histidine 259 and asparagine 279.

Belongs to the peptidase C1 family. Interacts with cysteine protease inhibitor ICP1. Interacts with cysteine protease inhibitor ICP2.

The protein localises to the cell membrane. It localises to the cytoplasmic vesicle. It is found in the phagosome. The protein resides in the secreted. It catalyses the reaction Hydrolysis of proteins, including basement membrane collagen and azocasein. Preferential cleavage: Arg-Arg-|-Xaa in small molecule substrates including Z-Arg-Arg-|-NHMec.. Inhibited by cysteine protease inhibitors ICP1 and ICP2. Inhibited by leupeptin and such inhibitors of cysteine proteinases as L-transepoxysuccinyl-L-leucylamido-(4-guanidino)butane, peptidyldiazomethanes, iodoacetic acid and chicken cystatin. Its function is as follows. Cysteine protease which degrades matrix proteins such as collagen, laminin and fibronectin and thus is involved in the destruction of human tissue. Can abolish adhesion. May play an important role in pathogenicity. In Entamoeba histolytica (strain ATCC 30459 / HM-1:IMSS / ABRM), this protein is Cysteine proteinase 2.